Consider the following 183-residue polypeptide: Outer membrane protein H.8 (183 aa).

The signal sequence occupies residues M1–A17. C18 is lipidated: N-palmitoyl cysteine. C18 is lipidated: S-diacylglycerol cysteine. Positions A27–A51 are disordered. Positions G57–D183 constitute a Plastocyanin-like domain. Positions 102, 166, 171, and 175 each coordinate Cu cation.

It depends on Cu cation as a cofactor.

The protein resides in the cell outer membrane. This is Outer membrane protein H.8 from Neisseria meningitidis serogroup C / serotype 2a (strain ATCC 700532 / DSM 15464 / FAM18).